We begin with the raw amino-acid sequence, 490 residues long: GDP-fucose protein O-fucosyltransferase 2 (490 aa).

The first 25 residues, 1-25, serve as a signal peptide directing secretion; that stretch reads MRGSWPRLGFPALLLLLHLLTGSDA. Residues Asn29 and Asn79 are each glycosylated (N-linked (GlcNAc...) asparagine). 81–85 lines the GDP-beta-L-fucose pocket; the sequence is SEGFN. Glu82 acts as the Proton acceptor in catalysis. Cys203 and Cys226 are disulfide-bonded. 336-338 provides a ligand contact to GDP-beta-L-fucose; the sequence is HLR. Asn368 carries an N-linked (GlcNAc...) asparagine glycan. Residues Asp418 and 435 to 436 contribute to the GDP-beta-L-fucose site; that span reads TF. An intrachain disulfide couples Cys459 to Cys466.

Belongs to the glycosyltransferase 68 family.

The protein localises to the endoplasmic reticulum. It localises to the golgi apparatus. It carries out the reaction L-seryl-[protein] + GDP-beta-L-fucose = 3-O-(alpha-L-fucosyl)-L-seryl-[protein] + GDP + H(+). It catalyses the reaction L-threonyl-[protein] + GDP-beta-L-fucose = 3-O-(alpha-L-fucosyl)-L-threonyl-[protein] + GDP + H(+). It functions in the pathway protein modification; protein glycosylation. Its activity is regulated as follows. Does not require divalent metal ions for optimal activity. Catalyzes the reaction that attaches fucose through an O-glycosidic linkage to a conserved serine or threonine residue in the consensus sequence C1-X-X-S/T-C2 of thrombospondin type I repeats (TSRs) where C1 and C2 are the first and second cysteines of the repeat, respectively. O-fucosylates members of several protein families including the ADAMTS, the thrombospondin (TSP) and spondin families. This Drosophila melanogaster (Fruit fly) protein is GDP-fucose protein O-fucosyltransferase 2.